The following is a 699-amino-acid chain: Elongation factor G (699 aa).

The region spanning 8–288 is the tr-type G domain; that stretch reads EDYRNFGIMA…AVVDYLPSPL (281 aa). GTP is bound by residues 17–24, 86–90, and 140–143; these read AHIDAGKT, DTPGH, and NKMD.

The protein belongs to the TRAFAC class translation factor GTPase superfamily. Classic translation factor GTPase family. EF-G/EF-2 subfamily.

The protein localises to the cytoplasm. Functionally, catalyzes the GTP-dependent ribosomal translocation step during translation elongation. During this step, the ribosome changes from the pre-translocational (PRE) to the post-translocational (POST) state as the newly formed A-site-bound peptidyl-tRNA and P-site-bound deacylated tRNA move to the P and E sites, respectively. Catalyzes the coordinated movement of the two tRNA molecules, the mRNA and conformational changes in the ribosome. This chain is Elongation factor G, found in Agrobacterium fabrum (strain C58 / ATCC 33970) (Agrobacterium tumefaciens (strain C58)).